Consider the following 478-residue polypeptide: ATP-dependent RNA helicase DDX19A (478 aa).

At A2 the chain carries N-acetylalanine. The N-terminal lobe stretch occupies residues A2–E299. Residue K26 forms a Glycyl lysine isopeptide (Lys-Gly) (interchain with G-Cter in SUMO1); alternate linkage. K26 participates in a covalent cross-link: Glycyl lysine isopeptide (Lys-Gly) (interchain with G-Cter in SUMO2); alternate. Position 42 is a phosphothreonine (T42). Residues D54–S67 form an N-terminal helix region. The Q motif signature appears at K91–E119. ATP contacts are provided by residues Q118 and S137–T144. The region spanning M124–I294 is the Helicase ATP-binding domain. The DEAD box motif lies at D241–D244. The C-terminal lobe stretch occupies residues E300 to N478. The region spanning T305–I473 is the Helicase C-terminal domain. Residues R428 and R431 each contribute to the ATP site.

The protein belongs to the DEAD box helicase family. DDX19/DBP5 subfamily.

Its subcellular location is the cytoplasm. The protein localises to the nucleus. It is found in the nucleoplasm. The catalysed reaction is ATP + H2O = ADP + phosphate + H(+). Functionally, ATP-dependent RNA helicase involved in mRNA export from the nucleus. Rather than unwinding RNA duplexes, DDX19 functions as a remodeler of ribonucleoprotein particles, whereby proteins bound to nuclear mRNA are dissociated and replaced by cytoplasmic mRNA binding proteins. The sequence is that of ATP-dependent RNA helicase DDX19A (DDX19A) from Homo sapiens (Human).